The primary structure comprises 80 residues: Peptide LaIT2 (80 aa).

The signal sequence occupies residues 1 to 21; the sequence is MAKHLIVMFLVIMVISSLVDC. One can recognise a BetaSPN-type CS-alpha/beta domain in the interval 49-80; it reads QYGCPIISNMCEDHCRRKKMEGQCDLLDCVCS. Cystine bridges form between cysteine 52–cysteine 72, cysteine 59–cysteine 77, and cysteine 63–cysteine 79.

This sequence belongs to the long chain scorpion toxin family. Class 2 subfamily. As to expression, expressed by the venom gland.

It is found in the secreted. Its function is as follows. Dual-function toxin that acts both as an insecticidal and an antimicrobial peptide. May inhibit voltage-gated potassium channels (Kv). This amphipathic peptide causes significant antimicrobial activity against E.coli (MIC=7 uM) but does not show any activity against S.aureus even at high concentration. In vivo, causes paralysis or death to crickets. This is Peptide LaIT2 from Liocheles australasiae (Dwarf wood scorpion).